A 423-amino-acid chain; its full sequence is Sporulation-regulated protein 28 (423 aa).

Residues 28–342 (KGLQLSILLL…ENYRAKVLTE (315 aa)) form the Septin-type G domain. Positions 38–45 (GEKGSGKS) are G1 motif. GTP-binding positions include 38-45 (GEKGSGKS), Gly-124, 204-212 (KADGLTETE), and Arg-291. The segment at 121-124 (LFPG) is G3 motif. The interval 203-206 (PKAD) is G4 motif. Over residues 360–381 (RGSVSNVSTRRNSASRTLGNPD) the composition is skewed to polar residues. Residues 360-385 (RGSVSNVSTRRNSASRTLGNPDTNDE) form a disordered region. A coiled-coil region spans residues 384–417 (DENAYQIHKEIDEKNRIIEDYQRKIDLLEKMLAA).

It belongs to the TRAFAC class TrmE-Era-EngA-EngB-Septin-like GTPase superfamily. Septin GTPase family. Interacts with itself. Interacts with CDC11 and SPR3; probably to form a ring at the bud neck.

It is found in the membrane. It localises to the bud neck. Its function is as follows. Septins are GTPases involved in cytokinesis that assemble into filaments and form a ring at the cleavage site. May act by recruiting MYO1 and HOF1, a protein involved in septation, to the site of cleavage. Septins are also involved in cell morphogenesis, bud site selection, chitin deposition, cell cycle regulation, cell compartmentalization and spore wall formation. The polypeptide is Sporulation-regulated protein 28 (SPR28) (Saccharomyces cerevisiae (strain ATCC 204508 / S288c) (Baker's yeast)).